We begin with the raw amino-acid sequence, 601 residues long: Oligoendopeptidase F homolog (601 aa).

Zn(2+) is bound at residue H387. E388 is a catalytic residue. Zn(2+)-binding residues include H391 and H394.

Belongs to the peptidase M3 family. Zn(2+) serves as cofactor.

In terms of biological role, hydrolyzes peptides containing between 7 and 17 amino acids with a rather wide specificity. The protein is Oligoendopeptidase F homolog (pepF) of Lactococcus lactis subsp. lactis (strain IL1403) (Streptococcus lactis).